Consider the following 426-residue polypeptide: Enolase (426 aa).

Glutamine 165 contacts (2R)-2-phosphoglycerate. Glutamate 209 functions as the Proton donor in the catalytic mechanism. Residues aspartate 244, glutamate 287, and aspartate 313 each contribute to the Mg(2+) site. Positions 338, 367, 368, and 389 each coordinate (2R)-2-phosphoglycerate. Residue lysine 338 is the Proton acceptor of the active site.

Belongs to the enolase family. Mg(2+) serves as cofactor.

The protein localises to the cytoplasm. It localises to the secreted. Its subcellular location is the cell surface. It catalyses the reaction (2R)-2-phosphoglycerate = phosphoenolpyruvate + H2O. Its pathway is carbohydrate degradation; glycolysis; pyruvate from D-glyceraldehyde 3-phosphate: step 4/5. Its function is as follows. Catalyzes the reversible conversion of 2-phosphoglycerate (2-PG) into phosphoenolpyruvate (PEP). It is essential for the degradation of carbohydrates via glycolysis. This chain is Enolase, found in Methanococcus vannielii (strain ATCC 35089 / DSM 1224 / JCM 13029 / OCM 148 / SB).